Consider the following 698-residue polypeptide: Serotransferrin (698 aa).

A signal peptide spans 1 to 19 (MRFAVGALLACAALGLCLA). Transferrin-like domains are found at residues 25-347 (VKWC…NQRE) and 360-683 (VKWC…NIRK). 2 disulfides stabilise this stretch: C28/C67 and C38/C58. Position 42 is a dimethylated arginine (R42). 2 residues coordinate Fe(3+): D82 and Y114. 8 disulfides stabilise this stretch: C137-C213, C156-C350, C177-C193, C180-C196, C190-C198, C246-C260, C363-C395, and C373-C386. Hydrogencarbonate is bound by residues T139, R143, A145, and G146. Y207 provides a ligand contact to Fe(3+). A Fe(3+)-binding site is contributed by H268. S388 is subject to Phosphoserine. Fe(3+)-binding residues include D410 and Y447. Cystine bridges form between C420–C693, C435–C656, C471–C542, C495–C684, C505–C519, C516–C525, C582–C596, and C634–C639. The hydrogencarbonate site is built by T473, R477, A479, and G480. N512 carries an N-linked (GlcNAc...) asparagine glycan. Position 536 (Y536) interacts with Fe(3+). H604 is a Fe(3+) binding site. S685 is modified (phosphoserine).

This sequence belongs to the transferrin family. As to quaternary structure, monomer. Part of a complex composed of SLC40A1/ferroportin, TF/transferrin and HEPH/hephaestin that transfers iron from cells to transferrin. As to expression, expressed by the liver and secreted in plasma.

The protein localises to the secreted. Transferrins are iron binding transport proteins which can bind two Fe(3+) ions in association with the binding of an anion, usually bicarbonate. It is responsible for the transport of iron from sites of absorption and heme degradation to those of storage and utilization. Serum transferrin may also have a further role in stimulating cell proliferation. This is Serotransferrin (Tf) from Rattus norvegicus (Rat).